Consider the following 952-residue polypeptide: UvrABC system protein A (952 aa).

31-38 (GVSGSGKS) lines the ATP pocket. A C4-type zinc finger spans residues 253–280 (CPEHGSVLEELEPRIFSFNSPYGACPAC). 2 ABC transporter domains span residues 309 to 591 (WSRG…PQSL) and 611 to 938 (GNGK…AFLA). 643–650 (GPSGSGKS) contributes to the ATP binding site. The C4-type zinc finger occupies 742 to 768 (CEACGGDGTVKIEMLFLPDLYVPCEVC).

It belongs to the ABC transporter superfamily. UvrA family. As to quaternary structure, forms a heterotetramer with UvrB during the search for lesions.

The protein resides in the cytoplasm. Functionally, the UvrABC repair system catalyzes the recognition and processing of DNA lesions. UvrA is an ATPase and a DNA-binding protein. A damage recognition complex composed of 2 UvrA and 2 UvrB subunits scans DNA for abnormalities. When the presence of a lesion has been verified by UvrB, the UvrA molecules dissociate. The polypeptide is UvrABC system protein A (Thermus thermophilus (strain ATCC 27634 / DSM 579 / HB8)).